We begin with the raw amino-acid sequence, 377 residues long: MSVKELKERHMAATQTVNDLREKLKQKRLQLLDTDVSGYARSQGKTPVIFGPTDLVCCRILQGHTGKVYSLDWTPEKNRIVSASQDGRLIVWNALTSQKTHAIKLPCAWVMTCAFSPSGQSVACGGLDSVCSIFNLNSPIDKDGNHPVSRMLSGHKGYVSSCQYVPDEDTHVITSSGDQTCVLWDITTGLRTSVFGGEFQSGHTADVQSVSISSSNPRLFVSGSCDSTARLWDTRVASRAQRTFYGHEGDVNTVKFFPDGNRFGTGSDDGTCRLFDIRTGHQLQVYYQPHGDGDIPHVTSMAFSISGRLLFVGYSNGDCYVWDTLLAKVVLNLGAVQNSHEGRISCLGLSADGSALCTGSWDTNLKIWAFGGHRSVI.

WD repeat units lie at residues 63–93, 105–135, 154–185, 202–233, 246–276, 293–323, and 339–369; these read GHTG…IVWN, LPCA…SIFN, GHKG…VLWD, GHTA…RLWD, GHEG…RLFD, GDIP…YVWD, and SHEG…KIWA.

Belongs to the WD repeat G protein beta family. As to quaternary structure, g proteins are composed of 3 units, alpha, beta and gamma.

Functionally, guanine nucleotide-binding proteins (G proteins) are involved as a modulator or transducer in various transmembrane signaling systems. The beta and gamma chains are required for the GTPase activity, for replacement of GDP by GTP, and for G protein-effector interaction. The protein is Guanine nucleotide-binding protein subunit beta-2 of Nicotiana tabacum (Common tobacco).